Here is a 467-residue protein sequence, read N- to C-terminus: Fumarate hydratase class II (467 aa).

Substrate contacts are provided by residues 98-100 (SGT), R126, 129-132 (HPND), 139-141 (SSN), and T187. H188 functions as the Proton donor/acceptor in the catalytic mechanism. S318 is a catalytic residue. Substrate-binding positions include S319 and 324 to 326 (KVN).

Belongs to the class-II fumarase/aspartase family. Fumarase subfamily. As to quaternary structure, homotetramer.

Its subcellular location is the cytoplasm. It carries out the reaction (S)-malate = fumarate + H2O. Its pathway is carbohydrate metabolism; tricarboxylic acid cycle; (S)-malate from fumarate: step 1/1. Functionally, involved in the TCA cycle. Catalyzes the stereospecific interconversion of fumarate to L-malate. The chain is Fumarate hydratase class II from Salmonella typhi.